Here is a 539-residue protein sequence, read N- to C-terminus: Membrane protein insertase YidC (539 aa).

5 helical membrane passes run 6-26 (TLLVLLLALVSFLLFQQWQVA), 341-361 (SVIQSFVGNWGVAIICLTFIV), 416-436 (LGGCLPLILQMPIFIALYWAL), 454-474 (LSAQDPYFILPLLMGGSMFLI), and 495-515 (PVMFTFFFLWFPSGLVLYWLV).

It belongs to the OXA1/ALB3/YidC family. Type 1 subfamily. As to quaternary structure, interacts with the Sec translocase complex via SecD. Specifically interacts with transmembrane segments of nascent integral membrane proteins during membrane integration.

It localises to the cell inner membrane. Functionally, required for the insertion and/or proper folding and/or complex formation of integral membrane proteins into the membrane. Involved in integration of membrane proteins that insert both dependently and independently of the Sec translocase complex, as well as at least some lipoproteins. Aids folding of multispanning membrane proteins. This is Membrane protein insertase YidC from Vibrio vulnificus (strain YJ016).